Here is a 1419-residue protein sequence, read N- to C-terminus: Collagen alpha-1(II) chain (1419 aa).

Positions 1–25 are cleaved as a signal peptide; the sequence is MIRLGAPQSLVLLTLLIATVLQCQG. Residues 26-113 constitute a propeptide, N-terminal propeptide; it reads QDARKLGPKG…PGLGGGNFAA (88 aa). Positions 28–1168 are disordered; it reads ARKLGPKGQK…GQREKGPDPL (1141 aa). 2 stretches are compositionally biased toward basic and acidic residues: residues 36–47 and 64–85; these read QKGEPGDIKDII and PRGD…RDGE. Pro residues predominate over residues 89-104; that stretch reads PGNPGPPGPPGPPGPP. A 5-hydroxylysine modification is found at Lys122. Residue Lys122 is glycosylated (O-linked (Gal...) hydroxylysine). The segment covering 124 to 135 has biased composition (low complexity); sequence GGAQMGVMQGPM. Residues 133-1146 are triple-helical region; that stretch reads GPMGPMGPRG…PGPPGPPGPP (1014 aa). The segment covering 140-149 has biased composition (pro residues); sequence PRGPPGPAGA. Residues 150–171 show a composition bias toward low complexity; that stretch reads PGPQGFQGNPGEPGEPGVSGPI. A compositionally biased stretch (basic and acidic residues) spans 183–197; it reads PGDDGEAGKPGKAGE. A 5-hydroxylysine mark is found at Lys219, Lys231, and Lys240. O-linked (Gal...) hydroxylysine glycosylation is found at Lys219, Lys231, and Lys240. Low complexity-rich tracts occupy residues 242–252 and 267–282; these read ESGSPGENGSP and TGPA…DGQP. The segment covering 292 to 301 has biased composition (gly residues); that stretch reads GPAGGPGFLG. The residue at position 306 (Lys306) is a 5-hydroxylysine. Residue Lys306 is glycosylated (O-linked (Gal...) hydroxylysine). Residues 335–363 are compositionally biased toward low complexity; the sequence is PAGASGNPGTDGIPGAKGSAGAPGIAGAP. The segment covering 365-374 has biased composition (pro residues); the sequence is FPGPRGPPGP. Residues 404-417 show a composition bias toward low complexity; sequence ETGPAGPQGAPGPA. 2 positions are modified to 5-hydroxylysine: Lys540 and Lys552. O-linked (Gal...) hydroxylysine glycans are attached at residues Lys540 and Lys552. Positions 554–563 are enriched in low complexity; the sequence is LAGAPGLRGL. 2 positions are modified to 4-hydroxyproline: Pro591 and Pro600. A 3-hydroxyproline; partial modification is found at Pro602. 4-hydroxyproline is present on residues Pro603 and Pro606. The segment covering 638–668 has biased composition (low complexity); it reads ERGSPGAQGLQGPRGLPGTPGTDGPKGAAGP. The span at 696 to 707 shows a compositional bias: basic and acidic residues; that stretch reads KGDRGDVGEKGP. Composition is skewed to low complexity over residues 765 to 780 and 809 to 846; these read AGFA…PGAK and PTGV…NGNP. Pro839 is subject to 3-hydroxyproline; partial. 4-hydroxyproline occurs at positions 840, 846, and 852. Positions 1001–1011 are enriched in pro residues; the sequence is APGPPGSPGPA. Over residues 1047–1061 the composition is skewed to basic and acidic residues; it reads RGDKGEAGEPGERGL. A 3-hydroxyproline; partial modification is found at Pro1076. Composition is skewed to low complexity over residues 1080 to 1089 and 1103 to 1113; these read SGDQGTSGPA and PSGKDGSNGIP. Residue Pro1113 is modified to 4-hydroxyproline. A 3-hydroxyproline modification is found at Pro1118. 4-hydroxyproline is present on Pro1119. The span at 1131 to 1148 shows a compositional bias: pro residues; that stretch reads AGPPGNPGPPGPPGPPGP. Pro1133 is subject to 3-hydroxyproline; partial. 4-hydroxyproline occurs at positions 1134 and 1137. 3-hydroxyproline; partial is present on Pro1139. 4-hydroxyproline occurs at positions 1140 and 1143. Pro1145 is modified (3-hydroxyproline; partial). Position 1146 is a 4-hydroxyproline (Pro1146). Residues 1147-1173 are nonhelical region (C-terminal); it reads GPGIDMSAFAGLGQREKGPDPLQYMRA. A Fibrillar collagen NC1 domain is found at 1185-1419; it reads VEVDATLKSL…GVDIGPVCFL (235 aa). Intrachain disulfides connect Cys1215–Cys1247, Cys1255–Cys1417, and Cys1325–Cys1370. Ca(2+)-binding residues include Asp1233, Asn1235, Gln1236, Cys1238, and Asp1241. The N-linked (GlcNAc...) asparagine glycan is linked to Asn1320.

Belongs to the fibrillar collagen family. In terms of assembly, homotrimers of alpha 1(II) chains. In terms of processing, contains mostly 4-hydroxyproline. Prolines at the third position of the tripeptide repeating unit (G-X-P) are 4-hydroxylated in some or all of the chains. Contains 3-hydroxyproline at a few sites. This modification occurs on the first proline residue in the sequence motif Gly-Pro-Hyp, where Hyp is 4-hydroxyproline. Post-translationally, lysine residues at the third position of the tripeptide repeating unit (G-X-Y) are 5-hydroxylated in some or all of the chains. In terms of processing, O-glycosylated on hydroxylated lysine residues. The O-linked glycan consists of a Glc-Gal disaccharide. In terms of tissue distribution, expressed in chondrocytes.

It localises to the secreted. Its subcellular location is the extracellular space. The protein resides in the extracellular matrix. In terms of biological role, type II collagen is specific for cartilaginous tissues. It is essential for the normal embryonic development of the skeleton, for linear growth and for the ability of cartilage to resist compressive forces. This Rattus norvegicus (Rat) protein is Collagen alpha-1(II) chain.